Consider the following 188-residue polypeptide: Acireductone dioxygenase 1 (188 aa).

Residues His90, His92, Glu96, and His135 each coordinate Fe(2+). 4 residues coordinate Ni(2+): His90, His92, Glu96, and His135.

This sequence belongs to the acireductone dioxygenase (ARD) family. It depends on Fe(2+) as a cofactor. The cofactor is Ni(2+).

The protein localises to the cytoplasm. Its subcellular location is the nucleus. It catalyses the reaction 1,2-dihydroxy-5-(methylsulfanyl)pent-1-en-3-one + O2 = 4-methylsulfanyl-2-oxobutanoate + formate + 2 H(+). It carries out the reaction 1,2-dihydroxy-5-(methylsulfanyl)pent-1-en-3-one + O2 = 3-(methylsulfanyl)propanoate + CO + formate + 2 H(+). It functions in the pathway amino-acid biosynthesis; L-methionine biosynthesis via salvage pathway; L-methionine from S-methyl-5-thio-alpha-D-ribose 1-phosphate: step 5/6. Catalyzes 2 different reactions between oxygen and the acireductone 1,2-dihydroxy-3-keto-5-methylthiopentene (DHK-MTPene) depending upon the metal bound in the active site. Fe-containing acireductone dioxygenase (Fe-ARD) produces formate and 2-keto-4-methylthiobutyrate (KMTB), the alpha-ketoacid precursor of methionine in the methionine recycle pathway. Ni-containing acireductone dioxygenase (Ni-ARD) produces methylthiopropionate, carbon monoxide and formate, and does not lie on the methionine recycle pathway. The sequence is that of Acireductone dioxygenase 1 from Vitis vinifera (Grape).